The sequence spans 256 residues: 1-(5-phosphoribosyl)-5-[(5-phosphoribosylamino)methylideneamino] imidazole-4-carboxamide isomerase (256 aa).

Asp-8 (proton acceptor) is an active-site residue. Asp-130 serves as the catalytic Proton donor.

Belongs to the HisA/HisF family.

The protein localises to the cytoplasm. The catalysed reaction is 1-(5-phospho-beta-D-ribosyl)-5-[(5-phospho-beta-D-ribosylamino)methylideneamino]imidazole-4-carboxamide = 5-[(5-phospho-1-deoxy-D-ribulos-1-ylimino)methylamino]-1-(5-phospho-beta-D-ribosyl)imidazole-4-carboxamide. It participates in amino-acid biosynthesis; L-histidine biosynthesis; L-histidine from 5-phospho-alpha-D-ribose 1-diphosphate: step 4/9. The sequence is that of 1-(5-phosphoribosyl)-5-[(5-phosphoribosylamino)methylideneamino] imidazole-4-carboxamide isomerase from Pelodictyon phaeoclathratiforme (strain DSM 5477 / BU-1).